A 194-amino-acid polypeptide reads, in one-letter code: Probable GTP-binding protein EngB (194 aa).

The EngB-type G domain maps to 19-193 (DCIQICFWGR…VLFIEENIFK (175 aa)). GTP-binding positions include 27 to 34 (GRSNVGKS), 53 to 57 (GRTQF), 70 to 73 (DLPG), 137 to 140 (TKID), and 172 to 174 (VSS). 2 residues coordinate Mg(2+): S34 and T55.

Belongs to the TRAFAC class TrmE-Era-EngA-EngB-Septin-like GTPase superfamily. EngB GTPase family. The cofactor is Mg(2+).

Necessary for normal cell division and for the maintenance of normal septation. The sequence is that of Probable GTP-binding protein EngB from Mycoplasmopsis agalactiae (strain NCTC 10123 / CIP 59.7 / PG2) (Mycoplasma agalactiae).